Consider the following 194-residue polypeptide: Holliday junction branch migration complex subunit RuvA (194 aa).

Positions 1-61 (MYDFLTGIIK…DNQISLYGFK (61 aa)) are domain I. The tract at residues 62–139 (TVKERNLFQK…GDFSKNIAPM (78 aa)) is domain II. Residues 139–143 (MKNLL) are flexible linker. A domain III region spans residues 144–194 (ENSAELDDALAALVALGFSSKEVNKINPKLASLGELTTDAYIQKGLKLLTK).

The protein belongs to the RuvA family. Homotetramer. Forms an RuvA(8)-RuvB(12)-Holliday junction (HJ) complex. HJ DNA is sandwiched between 2 RuvA tetramers; dsDNA enters through RuvA and exits via RuvB. An RuvB hexamer assembles on each DNA strand where it exits the tetramer. Each RuvB hexamer is contacted by two RuvA subunits (via domain III) on 2 adjacent RuvB subunits; this complex drives branch migration. In the full resolvosome a probable DNA-RuvA(4)-RuvB(12)-RuvC(2) complex forms which resolves the HJ.

It localises to the cytoplasm. In terms of biological role, the RuvA-RuvB-RuvC complex processes Holliday junction (HJ) DNA during genetic recombination and DNA repair, while the RuvA-RuvB complex plays an important role in the rescue of blocked DNA replication forks via replication fork reversal (RFR). RuvA specifically binds to HJ cruciform DNA, conferring on it an open structure. The RuvB hexamer acts as an ATP-dependent pump, pulling dsDNA into and through the RuvAB complex. HJ branch migration allows RuvC to scan DNA until it finds its consensus sequence, where it cleaves and resolves the cruciform DNA. This is Holliday junction branch migration complex subunit RuvA from Oenococcus oeni (strain ATCC BAA-331 / PSU-1).